We begin with the raw amino-acid sequence, 899 residues long: Periodic tryptophan protein 2 homolog (899 aa).

WD repeat units follow at residues 9 to 52 (NLLG…TLPF), 53 to 92 (SHRK…VLYH), 94 to 132 (SFKA…DANA), 149 to 188 (QHFD…GFTP), 193 to 232 (GHRQ…GQDE), 252 to 291 (QNSA…MIHT), 294 to 334 (ISQN…YILK), 337 to 376 (GHFD…CIVT), 379 to 418 (EHTS…NFRT), 422 to 464 (PERL…DRLS), 465 to 504 (GHEG…QTSE), 507 to 546 (QLNS…QQAG), and 569 to 608 (AGTK…LLKK). The tract at residues 639–668 (DEQGEASDFEDRIDRSLPGSKRGDPSARRK) is disordered. Residues 647 to 668 (FEDRIDRSLPGSKRGDPSARRK) show a composition bias toward basic and acidic residues. The stretch at 669-709 (NPEVRVNGVAFSPNGSAFCAASTEGLLIYSLDTTIQFDPFD) is one WD 14 repeat. Residues 866 to 899 (TGSDEQPGAGGMSLNDVMQQDEGNASEDEWIGLV) are disordered. Acidic residues predominate over residues 889–899 (NASEDEWIGLV).

It belongs to the WD repeat PWP2 family.

The sequence is that of Periodic tryptophan protein 2 homolog from Neurospora crassa (strain ATCC 24698 / 74-OR23-1A / CBS 708.71 / DSM 1257 / FGSC 987).